The following is a 486-amino-acid chain: Cardiolipin synthase A (486 aa).

Transmembrane regions (helical) follow at residues 3-23 (TFYTVVSWLIILGYWLLIAGV) and 38-58 (MAWLLVIYILPLVGIVAYLSV). PLD phosphodiesterase domains lie at 219 to 246 (MDLRQHRKMIMIDNYIAYTGSMNMVDPR) and 399 to 426 (EGGLLHTKSVLVDGELSLVGTVNLDMRS). Residues histidine 224, lysine 226, aspartate 231, histidine 404, lysine 406, and aspartate 411 contribute to the active site.

It belongs to the phospholipase D family. Cardiolipin synthase subfamily. ClsA sub-subfamily.

It is found in the cell inner membrane. The catalysed reaction is 2 a 1,2-diacyl-sn-glycero-3-phospho-(1'-sn-glycerol) = a cardiolipin + glycerol. Catalyzes the reversible phosphatidyl group transfer from one phosphatidylglycerol molecule to another to form cardiolipin (CL) (diphosphatidylglycerol) and glycerol. This Cronobacter sakazakii (strain ATCC BAA-894) (Enterobacter sakazakii) protein is Cardiolipin synthase A.